The following is a 101-amino-acid chain: U-scoloptoxin(10)-Sm2a (101 aa).

An N-terminal signal peptide occupies residues 1 to 23 (MNKSMIILCAVLFLTYIIEENEA).

Belongs to the scoloptoxin-10 family. Post-translationally, contains 3 disulfide bonds. In terms of tissue distribution, expressed by the venom gland.

Its subcellular location is the secreted. This Scolopendra morsitans (Tanzanian blue ringleg centipede) protein is U-scoloptoxin(10)-Sm2a.